Here is a 442-residue protein sequence, read N- to C-terminus: tRNA-2-methylthio-N(6)-dimethylallyladenosine synthase (442 aa).

The MTTase N-terminal domain occupies K2 to R117. C11, C47, C80, C157, C161, and C164 together coordinate [4Fe-4S] cluster. One can recognise a Radical SAM core domain in the interval N143–E374. Residues Q377 to Q441 enclose the TRAM domain.

Belongs to the methylthiotransferase family. MiaB subfamily. As to quaternary structure, monomer. Requires [4Fe-4S] cluster as cofactor.

The protein localises to the cytoplasm. It catalyses the reaction N(6)-dimethylallyladenosine(37) in tRNA + (sulfur carrier)-SH + AH2 + 2 S-adenosyl-L-methionine = 2-methylsulfanyl-N(6)-dimethylallyladenosine(37) in tRNA + (sulfur carrier)-H + 5'-deoxyadenosine + L-methionine + A + S-adenosyl-L-homocysteine + 2 H(+). Catalyzes the methylthiolation of N6-(dimethylallyl)adenosine (i(6)A), leading to the formation of 2-methylthio-N6-(dimethylallyl)adenosine (ms(2)i(6)A) at position 37 in tRNAs that read codons beginning with uridine. In Wolbachia sp. subsp. Brugia malayi (strain TRS), this protein is tRNA-2-methylthio-N(6)-dimethylallyladenosine synthase.